The following is a 502-amino-acid chain: Polyadenylate-binding protein, cytoplasmic and nuclear (502 aa).

RRM domains are found at residues 14–90, 96–176, 191–275, and 299–376; these read LTIY…KKDE, GNIF…LYNP, TNCF…KGQR, and KNLY…YFKN.

This sequence belongs to the polyadenylate-binding protein type-1 family.

It localises to the cytoplasm. It is found in the nucleus. Its function is as follows. Binds the poly(A) tail of mRNA. Appears to be an important mediator of the multiple roles of the poly(A) tail in mRNA biogenesis, stability and translation. The sequence is that of Polyadenylate-binding protein, cytoplasmic and nuclear (PAB1) from Encephalitozoon cuniculi (strain GB-M1) (Microsporidian parasite).